The sequence spans 546 residues: Fusion glycoprotein F0 (546 aa).

An N-terminal signal peptide occupies residues 1–19 (MKILFATLLVVTTPHLVTG). Topologically, residues 20-491 (QIHWGNLSKI…TIKGASVTNT (472 aa)) are extracellular. Residues Asn-25, Asn-57, and Asn-63 are each glycosylated (N-linked (GlcNAc...) asparagine; by host). The interval 109–133 (FAGVALAGAALGVATAAQITAGIAL) is fusion peptide. Residues 134–162 (HQSMMNTQAIESLKASLETTNQAIEEIRQ) are a coiled coil. 4 cysteine pairs are disulfide-bonded: Cys-330-Cys-339, Cys-354-Cys-362, Cys-386-Cys-391, and Cys-393-Cys-416. Residues 458 to 483 (NLGNAVTKLEKAKDLLDSSDLILETI) are a coiled coil. Residues 492-512 (GHILVGAGLIAVVGILIVTCC) form a helical membrane-spanning segment. The Cytoplasmic portion of the chain corresponds to 513 to 546 (CRKRSNDSKVSTVILNPGLKPDLTGTSKSYVRSL).

This sequence belongs to the paramyxoviruses fusion glycoprotein family. In terms of assembly, homotrimer of disulfide-linked F1-F2. The inactive precursor F0 is glycosylated and proteolytically cleaved into F1 and F2 to be functionally active. The cleavage is mediated by cellular proteases during the transport and maturation of the polypeptide.

It localises to the virion membrane. The protein resides in the host cell membrane. Its function is as follows. Class I viral fusion protein. Under the current model, the protein has at least 3 conformational states: pre-fusion native state, pre-hairpin intermediate state, and post-fusion hairpin state. During viral and plasma cell membrane fusion, the heptad repeat (HR) regions assume a trimer-of-hairpins structure, positioning the fusion peptide in close proximity to the C-terminal region of the ectodomain. The formation of this structure appears to drive apposition and subsequent fusion of viral and plasma cell membranes. Directs fusion of viral and cellular membranes leading to delivery of the nucleocapsid into the cytoplasm. This fusion is pH independent and occurs directly at the outer cell membrane. The trimer of F1-F2 (F protein) probably interacts with HN at the virion surface. Upon HN binding to its cellular receptor, the hydrophobic fusion peptide is unmasked and interacts with the cellular membrane, inducing the fusion between cell and virion membranes. Later in infection, F proteins expressed at the plasma membrane of infected cells could mediate fusion with adjacent cells to form syncytia, a cytopathic effect that could lead to tissue necrosis. The protein is Fusion glycoprotein F0 (F) of Rinderpest virus (strain RBOK) (RDV).